Consider the following 284-residue polypeptide: Protein phosphatase 1 regulatory subunit 3B (284 aa).

The PP1-binding motif motif lies at 61–64 (RVSF). The 109-residue stretch at 124–232 (RNRLQTNHVC…SNKGKNYRIT (109 aa)) folds into the CBM21 domain. Serine 260 carries the phosphoserine modification.

In terms of assembly, interacts with glycogen, PPP1CC catalytic subunit of PP1 and PYGL. Associates with glycogen particles. Forms complexes with debranching enzyme, glycogen phosphorylase, glycogen synthase and phosphorylase kinase which is necessary for its regulation of PP1 activity. As to expression, highly expressed in liver. Moderately expressed in kidney, heart, testis, spleen and lung. Weakly expressed in skeletal muscle (at protein level). Expressed predominantly in liver. Expressed moderately in heart. Expressed weakly in lung, kidney, spleen and skeletal muscle.

Its function is as follows. Acts as a glycogen-targeting subunit for phosphatase PP1. Facilitates interaction of the PP1 with enzymes of the glycogen metabolism and regulates its activity. Suppresses the rate at which PP1 dephosphorylates (inactivates) glycogen phosphorylase and enhances the rate at which it activates glycogen synthase and therefore limits glycogen breakdown. Its activity is inhibited by PYGL, resulting in inhibition of the glycogen synthase and glycogen phosphorylase phosphatase activities of PP1. Dramatically increases basal and insulin-stimulated glycogen synthesis upon overexpression in hepatocytes. This chain is Protein phosphatase 1 regulatory subunit 3B (Ppp1r3b), found in Rattus norvegicus (Rat).